The sequence spans 468 residues: Two-component response regulator-like APRR9 (468 aa).

Positions 38 to 156 constitute a Response regulatory domain; the sequence is RVLLVESDYS…ELKNLWQHVW (119 aa). 2 stretches are compositionally biased toward polar residues: residues 168–177 and 194–203; these read HAQSLPASQH and DQGSGAQAIN. Disordered stretches follow at residues 168–203, 302–416, and 442–468; these read HAQS…QAIN, VVAL…SRSQ, and RKKL…STKS. The segment covering 315–327 has biased composition (basic and acidic residues); the sequence is TPTESHEKLRKVT. Over residues 328-364 the composition is skewed to polar residues; that stretch reads SDQGSATTSSNQENIGSSSVSFRNQVLQSTVTNQKQD. Composition is skewed to basic and acidic residues over residues 371 to 382 and 400 to 409; these read SNREKAASKEVE and EKPKEEESAK. Residues 417 to 459 form the CCT domain; sequence REAALMKFRLKRKDRCFDKKVRYQSRKKLAEQRPRVKGQFVRT. Residues 458–468 show a composition bias toward polar residues; sequence RTVNSDASTKS.

Belongs to the ARR-like family. Phosphorylated. Phosphorylation varies throughout the diurnal cycle.

It localises to the nucleus. Its function is as follows. Transcriptional repressor of CCA1 and LHY, and positive regulator of LWD1 and LWD2 expression. Controls photoperiodic flowering response and temperature compensation. Involved in the positive and negative feedback loops of the circadian clock. Expression of several members of the ARR-like family is controlled by circadian rhythm. Regulated at the transcriptional level by a corepressor complex consisting of ELF4, ELF3, and LUX. APRR9, APRR7, and APRR5 coordinately act on the upstream region of the target genes to repress their expression from noon until midnight. The particular coordinated sequential expression of APRR9, APRR7, APRR5, APRR3 and APPR1 result to circadian waves that may be at the basis of the endogenous circadian clock. In Arabidopsis thaliana (Mouse-ear cress), this protein is Two-component response regulator-like APRR9 (APRR9).